A 527-amino-acid chain; its full sequence is Homeobox protein NOBOX (527 aa).

Disordered regions lie at residues 1–126 (MEPT…DLKK), 194–245 (VEKL…DVFP), 271–306 (VTPP…RDVP), and 488–527 (ETGS…GAKE). Residues 136–195 (RKKTRTLYRSDQLEELERIFQEDHYPDSDKRHEISQMVGVTPQRIMVWFQNRRAKWRKVE) constitute a DNA-binding region (homeobox). The segment covering 194–203 (VEKLNEKETK) has biased composition (basic and acidic residues). The segment covering 488-506 (ETGSSLSKMSDEQTSSSLE) has biased composition (polar residues). Residues 511–527 (EEVRDKNKNSHAAGAKE) show a composition bias toward basic and acidic residues.

As to expression, specifically expressed in ovaries and testes. In ovaries, expressed in oocytes from primordial through antral follicles but not in granulosa cells, theca cells and corpora lutea.

The protein resides in the nucleus. In terms of biological role, transcription factor which plays an essential role in postnatal follicle development. Binds preferentially to the DNA sequences 5'-TAATTG-3', 5'-TAGTTG-3' and 5'-TAATTA-3'. Directly regulates the transcription of POU5F1 and GDF9 during early folliculogenesis. This chain is Homeobox protein NOBOX (Nobox), found in Mus musculus (Mouse).